The chain runs to 304 residues: Tetrahydromethanopterin S-methyltransferase subunit E (304 aa).

Transmembrane regions (helical) follow at residues 3–23, 86–106, 131–151, 152–172, 233–253, and 263–283; these read PLIG…AGAS, PLFA…TFAV, HTPV…VVSY, LMTV…IWGI, PVTG…TTVF, and WISV…NWKI.

Belongs to the MtrE family. In terms of assembly, the complex is composed of 8 subunits; MtrA, MtrB, MtrC, MtrD, MtrE, MtrF, MtrG and MtrH.

The protein resides in the cell membrane. The catalysed reaction is 5-methyl-5,6,7,8-tetrahydromethanopterin + coenzyme M + 2 Na(+)(in) = 5,6,7,8-tetrahydromethanopterin + methyl-coenzyme M + 2 Na(+)(out). The protein operates within one-carbon metabolism; methanogenesis from CO(2); methyl-coenzyme M from 5,10-methylene-5,6,7,8-tetrahydromethanopterin: step 2/2. In terms of biological role, part of a complex that catalyzes the formation of methyl-coenzyme M and tetrahydromethanopterin from coenzyme M and methyl-tetrahydromethanopterin. This is an energy-conserving, sodium-ion translocating step. This chain is Tetrahydromethanopterin S-methyltransferase subunit E, found in Methanosarcina acetivorans (strain ATCC 35395 / DSM 2834 / JCM 12185 / C2A).